The following is a 241-amino-acid chain: Uridylate kinase (241 aa).

14–17 lines the ATP pocket; that stretch reads KLSG. Gly56 serves as a coordination point for UMP. Residues Gly57 and Arg61 each contribute to the ATP site. Residues Asp77 and 138–145 contribute to the UMP site; that span reads TGNPFFTT. ATP-binding residues include Thr165, Tyr171, and Asp174.

This sequence belongs to the UMP kinase family. In terms of assembly, homohexamer.

It localises to the cytoplasm. The enzyme catalyses UMP + ATP = UDP + ADP. Its pathway is pyrimidine metabolism; CTP biosynthesis via de novo pathway; UDP from UMP (UMPK route): step 1/1. Its activity is regulated as follows. Inhibited by UTP. Catalyzes the reversible phosphorylation of UMP to UDP. This Psychrobacter cryohalolentis (strain ATCC BAA-1226 / DSM 17306 / VKM B-2378 / K5) protein is Uridylate kinase.